We begin with the raw amino-acid sequence, 865 residues long: DNA topoisomerase 1 (865 aa).

Positions 3 to 142 (KALVIVESPA…RYSRVVFNEI (140 aa)) constitute a Toprim domain. Position 9 (Glu-9) interacts with Mg(2+). Positions 37–65 (LPTSGSAAKKSADSTSTKTAKKPKKDERG) are disordered. Residues 39-54 (TSGSAAKKSADSTSTK) show a composition bias toward low complexity. Mg(2+) is bound at residue Asp-111. Positions 158-575 (NIDRVNAQQA…HFFSDFTQQL (418 aa)) constitute a Topo IA-type catalytic domain. Residues 192 to 197 (SAGRVQ) form an interaction with DNA region. The active-site O-(5'-phospho-DNA)-tyrosine intermediate is the Tyr-319. C4-type zinc fingers lie at residues 599-630 (CPTC…KERC), 662-689 (CPKC…NPTC), and 711-736 (CEKC…NEEC).

This sequence belongs to the type IA topoisomerase family. As to quaternary structure, monomer. The cofactor is Mn(2+). Ca(2+) serves as cofactor.

The catalysed reaction is ATP-independent breakage of single-stranded DNA, followed by passage and rejoining.. Functionally, releases the supercoiling and torsional tension of DNA, which is introduced during the DNA replication and transcription, by transiently cleaving and rejoining one strand of the DNA duplex. Introduces a single-strand break via transesterification at a target site in duplex DNA. The scissile phosphodiester is attacked by the catalytic tyrosine of the enzyme, resulting in the formation of a DNA-(5'-phosphotyrosyl)-enzyme intermediate and the expulsion of a 3'-OH DNA strand. The free DNA strand then undergoes passage around the unbroken strand, thus removing DNA supercoils. Finally, in the religation step, the DNA 3'-OH attacks the covalent intermediate to expel the active-site tyrosine and restore the DNA phosphodiester backbone. This is DNA topoisomerase 1 from Escherichia coli (strain K12).